We begin with the raw amino-acid sequence, 262 residues long: MSTLDTPLVVAGKTYHSRLMVGTGKYQDLEETQNAIQASGAEIVTIAIRRSNIGQNPGEPNLLDVISPHCYTLLPNTAGCYNAKEAVRTCRLARELLDGHSLVKLEVLGDEKTLFPDLVETYQAAEVLIKEDFQVMVYTNDDPIAAKRLEEMGCVAVMPLAAPIGSGLGIRNPYNILEIVQNATVPILVDAGVGTASDAAVAMELGCDGVLMNTAIAGAQNPILMASAMKKAVEAGRDAYLAGRIPRRRYASASSPLEGTFF.

The Schiff-base intermediate with DXP role is filled by K104. Residues G165, A191–G192, and N213–T214 contribute to the 1-deoxy-D-xylulose 5-phosphate site.

It belongs to the ThiG family. In terms of assembly, homotetramer. Forms heterodimers with either ThiH or ThiS.

It localises to the cytoplasm. It carries out the reaction [ThiS sulfur-carrier protein]-C-terminal-Gly-aminoethanethioate + 2-iminoacetate + 1-deoxy-D-xylulose 5-phosphate = [ThiS sulfur-carrier protein]-C-terminal Gly-Gly + 2-[(2R,5Z)-2-carboxy-4-methylthiazol-5(2H)-ylidene]ethyl phosphate + 2 H2O + H(+). It participates in cofactor biosynthesis; thiamine diphosphate biosynthesis. Catalyzes the rearrangement of 1-deoxy-D-xylulose 5-phosphate (DXP) to produce the thiazole phosphate moiety of thiamine. Sulfur is provided by the thiocarboxylate moiety of the carrier protein ThiS. In vitro, sulfur can be provided by H(2)S. The sequence is that of Thiazole synthase from Nitrosococcus oceani (strain ATCC 19707 / BCRC 17464 / JCM 30415 / NCIMB 11848 / C-107).